Here is a 249-residue protein sequence, read N- to C-terminus: Coproheme decarboxylase (249 aa).

Residue tyrosine 145 is part of the active site. Fe-coproporphyrin III is bound by residues 145-149 (YPMAR) and histidine 172.

This sequence belongs to the ChdC family. Type 1 subfamily. It depends on Fe-coproporphyrin III as a cofactor.

It carries out the reaction Fe-coproporphyrin III + 2 H2O2 + 2 H(+) = heme b + 2 CO2 + 4 H2O. The catalysed reaction is Fe-coproporphyrin III + H2O2 + H(+) = harderoheme III + CO2 + 2 H2O. It catalyses the reaction harderoheme III + H2O2 + H(+) = heme b + CO2 + 2 H2O. Its pathway is porphyrin-containing compound metabolism; protoheme biosynthesis. Functionally, involved in coproporphyrin-dependent heme b biosynthesis. Catalyzes the decarboxylation of Fe-coproporphyrin III (coproheme) to heme b (protoheme IX), the last step of the pathway. The reaction occurs in a stepwise manner with a three-propionate intermediate. In Oceanobacillus iheyensis (strain DSM 14371 / CIP 107618 / JCM 11309 / KCTC 3954 / HTE831), this protein is Coproheme decarboxylase.